We begin with the raw amino-acid sequence, 101 residues long: Small ribosomal subunit protein bS18c (101 aa).

Over residues 1 to 19 (MDKSKQPFRKSKRSFRRRL) the composition is skewed to basic residues. The interval 1–26 (MDKSKQPFRKSKRSFRRRLPPIGSGD) is disordered.

It belongs to the bacterial ribosomal protein bS18 family. In terms of assembly, part of the 30S ribosomal subunit.

It is found in the plastid. It localises to the chloroplast. The sequence is that of Small ribosomal subunit protein bS18c from Phalaenopsis aphrodite subsp. formosana (Moth orchid).